Here is a 467-residue protein sequence, read N- to C-terminus: ATP-dependent protease ATPase subunit HslU (467 aa).

Residues V22 and 64 to 69 (GVGKTE) each bind ATP. The interval 149–192 (QTNNPLESLFGGAIPNFGQNNEDEEEPPTEEIKTKRSEIKRQLE) is disordered. The span at 178 to 192 (EEIKTKRSEIKRQLE) shows a compositional bias: basic and acidic residues. Residues D280, E345, and R417 each coordinate ATP.

It belongs to the ClpX chaperone family. HslU subfamily. In terms of assembly, a double ring-shaped homohexamer of HslV is capped on each side by a ring-shaped HslU homohexamer. The assembly of the HslU/HslV complex is dependent on binding of ATP.

The protein localises to the cytoplasm. Its function is as follows. ATPase subunit of a proteasome-like degradation complex; this subunit has chaperone activity. The binding of ATP and its subsequent hydrolysis by HslU are essential for unfolding of protein substrates subsequently hydrolyzed by HslV. HslU recognizes the N-terminal part of its protein substrates and unfolds these before they are guided to HslV for hydrolysis. The chain is ATP-dependent protease ATPase subunit HslU from Staphylococcus aureus (strain MW2).